The sequence spans 213 residues: Adenylate kinase (213 aa).

10–15 (GAGKGT) contributes to the ATP binding site. The segment at 30 to 59 (STGDMFRAAMANQTEMGLLAKSYIDKGDLV) is NMP. AMP is bound by residues T31, R36, 57 to 59 (DLV), 86 to 89 (GYPR), and Q93. Residues 127 to 160 (GRIIHKKTGETFHKIFNPPAGDYDENDYYQREDD) form an LID region. Residues R128 and 137–138 (TF) contribute to the ATP site. AMP-binding residues include R157 and R168. Position 196 (Q196) interacts with ATP.

It belongs to the adenylate kinase family. Monomer.

It localises to the cytoplasm. It catalyses the reaction AMP + ATP = 2 ADP. Its pathway is purine metabolism; AMP biosynthesis via salvage pathway; AMP from ADP: step 1/1. Its function is as follows. Catalyzes the reversible transfer of the terminal phosphate group between ATP and AMP. Plays an important role in cellular energy homeostasis and in adenine nucleotide metabolism. In Streptococcus uberis (strain ATCC BAA-854 / 0140J), this protein is Adenylate kinase.